We begin with the raw amino-acid sequence, 248 residues long: MSEVRTGFLTMTTIILISIGLTMMGTGLYQKTTMSSCIRETSSQFTLLGLLLLLIPQIGLYGICCRSKRLFNFFFYGMVVLIIIVSYYSIKCSIYNTTFGIAKNPAKDNRTVPQLLGRLVSKEKFEKVTYCIIHKHDCNYNASKNSNVWKYCCAQPVGCGTITMFDKPGEWSWKHQYERNQVPEECSYEYCLDCRGCQLSILKAIVHQWKYLSMFAYPALVLSCISLAIAWSLKETIHENEDYRGSYS.

The Cytoplasmic segment spans residues 1 to 7 (MSEVRTG). A helical membrane pass occupies residues 8 to 28 (FLTMTTIILISIGLTMMGTGL). At 29 to 44 (YQKTTMSSCIRETSSQ) the chain is on the extracellular side. A helical membrane pass occupies residues 45–65 (FTLLGLLLLLIPQIGLYGICC). At 66-69 (RSKR) the chain is on the cytoplasmic side. The chain crosses the membrane as a helical span at residues 70–90 (LFNFFFYGMVVLIIIVSYYSI). Over 91 to 210 (KCSIYNTTFG…ILKAIVHQWK (120 aa)) the chain is Extracellular. N-linked (GlcNAc...) asparagine glycosylation is found at asparagine 96, asparagine 109, and asparagine 141. The helical transmembrane segment at 211–231 (YLSMFAYPALVLSCISLAIAW) threads the bilayer. Residues 232-248 (SLKETIHENEDYRGSYS) are Cytoplasmic-facing.

This sequence belongs to the tetraspanin (TM4SF) family.

It is found in the membrane. In terms of biological role, may be involved in the regulation of cell differentiation. This chain is Tetraspanin-17 (TET17), found in Arabidopsis thaliana (Mouse-ear cress).